The chain runs to 692 residues: Putative ESX-1 scaffolding and assembly protein SaeA (692 aa).

A compositionally biased stretch (basic and acidic residues) spans Met1–Pro21. Disordered stretches follow at residues Met1–Leu23 and Pro87–Phe134. Pro residues predominate over residues Ala89–Gly107.

Its function is as follows. May be involved in assembly of the ESX-1 / type VII specialized secretion system (T7SS), which exports several proteins including EsxA and EsxB. Involved in DNA conjugation in recipient (MKD8) but not donor (mc(2)155) strain. The chain is Putative ESX-1 scaffolding and assembly protein SaeA (saeA) from Mycolicibacterium smegmatis (strain MKD8) (Mycobacterium smegmatis).